Here is a 114-residue protein sequence, read N- to C-terminus: MSLKIRLARAGAKKRPFYHIVVADSRSPRDGKFIERIGTYNPMLPADHEDRIRLVTDRVTHWLSQGAQATDRVARFIGKAGLAPMPAFREQPVQSAPKKKAQERAAERAKAAEA.

The disordered stretch occupies residues 87–114 (AFREQPVQSAPKKKAQERAAERAKAAEA). A compositionally biased stretch (basic and acidic residues) spans 100–114 (KAQERAAERAKAAEA).

The protein belongs to the bacterial ribosomal protein bS16 family.

The protein is Small ribosomal subunit protein bS16 of Acidiphilium cryptum (strain JF-5).